A 224-amino-acid polypeptide reads, in one-letter code: Pleckstrin homology domain-containing family B member 2 (224 aa).

A PH domain is found at 2-109 (AFVKSGWLLR…WKIALQDART (108 aa)). K20 serves as a coordination point for a 1,2-diacyl-sn-glycero-3-phospho-L-serine.

The protein resides in the recycling endosome membrane. In terms of biological role, involved in retrograde transport of recycling endosomes. This chain is Pleckstrin homology domain-containing family B member 2 (PLEKHB2), found in Gallus gallus (Chicken).